The chain runs to 367 residues: GTPase Obg (367 aa).

An Obg domain is found at 1–158; sequence MFIDNVELTV…VQIRLELKLI (158 aa). The OBG-type G domain occupies 159–358; the sequence is ADVGLVGFPN…LKYALYDLVK (200 aa). GTP-binding positions include 165–172, 190–194, 212–215, 280–283, and 339–341; these read GFPNVGKS, FTTLT, DIPG, TKID, and SAV. Residues Ser172 and Thr192 each contribute to the Mg(2+) site.

The protein belongs to the TRAFAC class OBG-HflX-like GTPase superfamily. OBG GTPase family. Monomer. The cofactor is Mg(2+).

Its subcellular location is the cytoplasm. In terms of biological role, an essential GTPase which binds GTP, GDP and possibly (p)ppGpp with moderate affinity, with high nucleotide exchange rates and a fairly low GTP hydrolysis rate. Plays a role in control of the cell cycle, stress response, ribosome biogenesis and in those bacteria that undergo differentiation, in morphogenesis control. The protein is GTPase Obg of Nitratiruptor sp. (strain SB155-2).